We begin with the raw amino-acid sequence, 634 residues long: Acetylcholinesterase (634 aa).

Residues 1–23 (MKTSDILLLPTVLLTFLFHNCFA) form the signal peptide. An intrachain disulfide couples Cys-91 to Cys-118. N-linked (GlcNAc...) asparagine glycosylation is found at Asn-133 and Asn-184. The active-site Acyl-ester intermediate is the Ser-225. An intrachain disulfide couples Cys-279 to Cys-290. The N-linked (GlcNAc...) asparagine glycan is linked to Asn-283. Glu-352 functions as the Charge relay system in the catalytic mechanism. N-linked (GlcNAc...) asparagine glycosylation occurs at Asn-368. A disulfide bridge connects residues Cys-427 and Cys-580. The active-site Charge relay system is the His-495. Asn-512 and Asn-592 each carry an N-linked (GlcNAc...) asparagine glycan.

This sequence belongs to the type-B carboxylesterase/lipase family. As to quaternary structure, dimers and collagen-tailed forms, in which catalytic tetramers are associated with anchoring proteins that attach them to the basal lamina or to cell membranes. In the collagen-tailed forms, subunits are associated with a specific collagen, COLQ, which triggers the formation of isoform T tetramers from dimers.

The protein localises to the synapse. It is found in the secreted. It localises to the cell membrane. It carries out the reaction acetylcholine + H2O = choline + acetate + H(+). In terms of biological role, terminates signal transduction at the neuromuscular junction by rapid hydrolysis of the acetylcholine released into the synaptic cleft. This chain is Acetylcholinesterase (ache), found in Danio rerio (Zebrafish).